Reading from the N-terminus, the 559-residue chain is Thermosome subunit alpha (559 aa).

The span at 536-552 (SGEKKGEKKEGGEEEKS) shows a compositional bias: basic and acidic residues. Residues 536–559 (SGEKKGEKKEGGEEEKSSTPSSLE) form a disordered region.

It belongs to the TCP-1 chaperonin family. Forms a Heterooligomeric complex of two stacked nine-membered rings; one of alpha and the other of beta subunits.

Molecular chaperone; binds unfolded polypeptides in vitro, and has a weak ATPase activity. This is Thermosome subunit alpha (thsA) from Sulfurisphaera tokodaii (strain DSM 16993 / JCM 10545 / NBRC 100140 / 7) (Sulfolobus tokodaii).